Here is a 144-residue protein sequence, read N- to C-terminus: MRNTARWAATLGLTATAVCGPLAGASLASPATAPASLYAPSALVLTVGHGESAATAAPLRAVTLTCAPTASGTHPAAAAACAELRAAHGDPSALAAEDSVMCTREYAPVVVTVDGVWQGRRLSYERTFANECVKNAGSASVFTF.

Residues 1–35 (MRNTARWAATLGLTATAVCGPLAGASLASPATAPA) form the signal peptide. Intrachain disulfides connect Cys-66-Cys-81 and Cys-102-Cys-132.

Belongs to the protease inhibitor I16 (SSI) family. Homodimer.

It localises to the secreted. Its function is as follows. Strong inhibitory activity toward subtilisin BPN' and, to a lesser extent, toward trypsin. The chain is Subtilase-type protease inhibitor (sti1) from Streptomyces coelicolor (strain ATCC BAA-471 / A3(2) / M145).